The following is a 163-amino-acid chain: MANESNNLGLEITELRLGLPGDIVVSGESISGKKRASPEVEIDLKCEPAKKSQVVGWPPVCSYRRKNSLERTKSSYVKVSVDGAAFLRKIDLEMYKCYQDLASALQILFGCYINFDDTLKESECVPIYEDKDGDWMLAGDVPWEMFLGSCKRLRIMKRSCNRG.

Residues 15-19 (LRLGL) carry the EAR-like (transcriptional repression) motif. The 87-residue stretch at 74–160 (SSYVKVSVDG…KRLRIMKRSC (87 aa)) folds into the PB1 domain.

The protein belongs to the Aux/IAA family. As to quaternary structure, homodimers and heterodimers. As to expression, highly expressed in stems and flowers.

It is found in the nucleus. In terms of biological role, aux/IAA proteins are short-lived transcriptional factors that function as repressors of early auxin response genes at low auxin concentrations. Repression is thought to result from the interaction with auxin response factors (ARFs), proteins that bind to the auxin-responsive promoter element (AuxRE). Formation of heterodimers with ARF proteins may alter their ability to modulate early auxin response genes expression. This is Auxin-responsive protein IAA5 (IAA5) from Arabidopsis thaliana (Mouse-ear cress).